A 134-amino-acid chain; its full sequence is Transcription antitermination protein NusB (134 aa).

Belongs to the NusB family.

Functionally, involved in transcription antitermination. Required for transcription of ribosomal RNA (rRNA) genes. Binds specifically to the boxA antiterminator sequence of the ribosomal RNA (rrn) operons. The chain is Transcription antitermination protein NusB from Syntrophomonas wolfei subsp. wolfei (strain DSM 2245B / Goettingen).